Consider the following 304-residue polypeptide: Glutaminase (304 aa).

Residues Ser-63, Asn-114, Glu-158, Asn-165, Tyr-189, Tyr-240, and Val-258 each contribute to the substrate site.

It belongs to the glutaminase family. In terms of assembly, homotetramer.

The catalysed reaction is L-glutamine + H2O = L-glutamate + NH4(+). This Shewanella oneidensis (strain ATCC 700550 / JCM 31522 / CIP 106686 / LMG 19005 / NCIMB 14063 / MR-1) protein is Glutaminase.